Here is a 244-residue protein sequence, read N- to C-terminus: rRNA adenine N-6-methyltransferase (244 aa).

S-adenosyl-L-methionine is bound by residues asparagine 11, isoleucine 13, glycine 38, glutamate 59, aspartate 84, and asparagine 101.

Belongs to the class I-like SAM-binding methyltransferase superfamily. rRNA adenine N(6)-methyltransferase family.

It carries out the reaction adenosine(2085) in 23S rRNA + 2 S-adenosyl-L-methionine = N(6)-dimethyladenosine(2085) in 23S rRNA + 2 S-adenosyl-L-homocysteine + 2 H(+). Functionally, this protein produces a dimethylation of the adenine residue at position 2085 in 23S rRNA, resulting in reduced affinity between ribosomes and macrolide-lincosamide-streptogramin B antibiotics. The protein is rRNA adenine N-6-methyltransferase (ermC') of Bacillus subtilis.